The primary structure comprises 273 residues: 5-deoxy-glucuronate isomerase (273 aa).

The protein belongs to the isomerase IolB family.

The catalysed reaction is 5-deoxy-D-glucuronate = 5-dehydro-2-deoxy-D-gluconate. It participates in polyol metabolism; myo-inositol degradation into acetyl-CoA; acetyl-CoA from myo-inositol: step 4/7. Its function is as follows. Involved in the isomerization of 5-deoxy-glucuronate (5DG) to 5-dehydro-2-deoxy-D-gluconate (DKG or 2-deoxy-5-keto-D-gluconate). The chain is 5-deoxy-glucuronate isomerase from Listeria innocua serovar 6a (strain ATCC BAA-680 / CLIP 11262).